Reading from the N-terminus, the 486-residue chain is Vacuolar-processing enzyme beta-isozyme (486 aa).

The N-terminal stretch at 1-21 (MAKSCYFRPALLLLLVLLVHA) is a signal peptide. The active site involves His-169. The active-site Nucleophile is Cys-211. A disulfide bond links Cys-244 and Cys-258. Asn-309 carries an N-linked (GlcNAc...) asparagine glycan. 2 disulfides stabilise this stretch: Cys-420-Cys-450 and Cys-432-Cys-467.

Belongs to the peptidase C13 family. Auto-catalytic activation. Seed specific. Also expressed in the flowers and buds.

The protein resides in the vacuole. The protein localises to the protein storage vacuole. It carries out the reaction Hydrolysis of proteins and small molecule substrates at -Asn-|-Xaa- bonds.. In terms of biological role, asparagine-specific endopeptidase involved in the processing of vacuolar seed protein precursors into the mature forms. Probably involved in post-translational proteolysis of seed storage proteins in the protein storage vacuole of developing seeds. The protein is Vacuolar-processing enzyme beta-isozyme of Arabidopsis thaliana (Mouse-ear cress).